Consider the following 325-residue polypeptide: N-acetyl-gamma-glutamyl-phosphate reductase (325 aa).

Cys135 is an active-site residue.

The protein belongs to the NAGSA dehydrogenase family. Type 1 subfamily.

The protein localises to the cytoplasm. The enzyme catalyses N-acetyl-L-glutamate 5-semialdehyde + phosphate + NADP(+) = N-acetyl-L-glutamyl 5-phosphate + NADPH + H(+). Its pathway is amino-acid biosynthesis; L-arginine biosynthesis; N(2)-acetyl-L-ornithine from L-glutamate: step 3/4. Functionally, catalyzes the NADPH-dependent reduction of N-acetyl-5-glutamyl phosphate to yield N-acetyl-L-glutamate 5-semialdehyde. In Flavobacterium johnsoniae (strain ATCC 17061 / DSM 2064 / JCM 8514 / BCRC 14874 / CCUG 350202 / NBRC 14942 / NCIMB 11054 / UW101) (Cytophaga johnsonae), this protein is N-acetyl-gamma-glutamyl-phosphate reductase.